The chain runs to 611 residues: DNA mismatch repair protein MutL (611 aa).

This sequence belongs to the DNA mismatch repair MutL/HexB family.

In terms of biological role, this protein is involved in the repair of mismatches in DNA. It is required for dam-dependent methyl-directed DNA mismatch repair. May act as a 'molecular matchmaker', a protein that promotes the formation of a stable complex between two or more DNA-binding proteins in an ATP-dependent manner without itself being part of a final effector complex. The chain is DNA mismatch repair protein MutL from Borrelia garinii subsp. bavariensis (strain ATCC BAA-2496 / DSM 23469 / PBi) (Borreliella bavariensis).